The following is an 83-amino-acid chain: MPLAVDLLHPEPQREIRCHKLKRLVQHPNSYFMDVKCSGCFKISTVFSHATTVVVCVGCNTVLCQPTRGKAKLTEGCSFRKKQ.

The C4-type zinc-finger motif lies at 37 to 59; that stretch reads CSGCFKISTVFSHATTVVVCVGC.

This sequence belongs to the eukaryotic ribosomal protein eS27 family. It depends on Zn(2+) as a cofactor.

The polypeptide is Small ribosomal subunit protein eS27 (rps-27) (Caenorhabditis elegans).